We begin with the raw amino-acid sequence, 122 residues long: Large ribosomal subunit protein uL14 (122 aa).

This sequence belongs to the universal ribosomal protein uL14 family. In terms of assembly, part of the 50S ribosomal subunit. Forms a cluster with proteins L3 and L19. In the 70S ribosome, L14 and L19 interact and together make contacts with the 16S rRNA in bridges B5 and B8.

Functionally, binds to 23S rRNA. Forms part of two intersubunit bridges in the 70S ribosome. This chain is Large ribosomal subunit protein uL14, found in Chromobacterium violaceum (strain ATCC 12472 / DSM 30191 / JCM 1249 / CCUG 213 / NBRC 12614 / NCIMB 9131 / NCTC 9757 / MK).